Here is a 1388-residue protein sequence, read N- to C-terminus: DNA-directed RNA polymerase subunit beta (1388 aa).

It belongs to the RNA polymerase beta chain family. The RNAP catalytic core consists of 2 alpha, 1 beta, 1 beta' and 1 omega subunit. When a sigma factor is associated with the core the holoenzyme is formed, which can initiate transcription.

It catalyses the reaction RNA(n) + a ribonucleoside 5'-triphosphate = RNA(n+1) + diphosphate. Its function is as follows. DNA-dependent RNA polymerase catalyzes the transcription of DNA into RNA using the four ribonucleoside triphosphates as substrates. The sequence is that of DNA-directed RNA polymerase subunit beta from Stenotrophomonas maltophilia (strain K279a).